The chain runs to 394 residues: Elongation factor Tu 2 (394 aa).

Residues 10 to 204 (KPHVNVGTIG…YLDSYIPEPE (195 aa)) form the tr-type G domain. A G1 region spans residues 19–26 (GHVDHGKT). Residue 19 to 26 (GHVDHGKT) coordinates GTP. Threonine 26 is a Mg(2+) binding site. The G2 stretch occupies residues 60-64 (GITIN). Residues 81–84 (DCPG) form a G3 region. GTP is bound by residues 81-85 (DCPGH) and 136-139 (NKCD). The segment at 136–139 (NKCD) is G4. Residues 174–176 (SAL) are G5.

Belongs to the TRAFAC class translation factor GTPase superfamily. Classic translation factor GTPase family. EF-Tu/EF-1A subfamily. In terms of assembly, monomer.

The protein localises to the cytoplasm. The catalysed reaction is GTP + H2O = GDP + phosphate + H(+). Functionally, GTP hydrolase that promotes the GTP-dependent binding of aminoacyl-tRNA to the A-site of ribosomes during protein biosynthesis. The polypeptide is Elongation factor Tu 2 (Serratia proteamaculans (strain 568)).